We begin with the raw amino-acid sequence, 159 residues long: SsrA-binding protein (159 aa).

This sequence belongs to the SmpB family.

Its subcellular location is the cytoplasm. Its function is as follows. Required for rescue of stalled ribosomes mediated by trans-translation. Binds to transfer-messenger RNA (tmRNA), required for stable association of tmRNA with ribosomes. tmRNA and SmpB together mimic tRNA shape, replacing the anticodon stem-loop with SmpB. tmRNA is encoded by the ssrA gene; the 2 termini fold to resemble tRNA(Ala) and it encodes a 'tag peptide', a short internal open reading frame. During trans-translation Ala-aminoacylated tmRNA acts like a tRNA, entering the A-site of stalled ribosomes, displacing the stalled mRNA. The ribosome then switches to translate the ORF on the tmRNA; the nascent peptide is terminated with the 'tag peptide' encoded by the tmRNA and targeted for degradation. The ribosome is freed to recommence translation, which seems to be the essential function of trans-translation. This is SsrA-binding protein from Coxiella burnetii (strain CbuG_Q212) (Coxiella burnetii (strain Q212)).